Reading from the N-terminus, the 71-residue chain is MPAGVPMSTYLKMLAASLLAMCAGAEVVHRYYRPDLTIPEIPPKRGELKTELLGLKERKHKPQISQQEELK.

The Mitochondrial matrix segment spans residues 1–8 (MPAGVPMS). A helical; Signal-anchor for type II membrane protein membrane pass occupies residues 9 to 25 (TYLKMLAASLLAMCAGA). At 26–71 (EVVHRYYRPDLTIPEIPPKRGELKTELLGLKERKHKPQISQQEELK) the chain is on the mitochondrial intermembrane side. The segment at 52 to 71 (LLGLKERKHKPQISQQEELK) is disordered.

It belongs to the UQCC6 family. Interacts with UQCRC1. Interacts with UQCRQ. Interacts with UQCC5. Forms a complex, named COMB/coordinator of mitochondrial CYTB biogenesis, composed of UQCC1, UQCC2, UQCC4, UQCC5 and UQCC6; stabilizes nascent cytochrome b/MT-CYB and promotes its membrane insertion. Forms a complex, named COMA, composed of UQCC1, UQCC2 and UQCC4; activates MT-CYB translation. Forms a complex, named COMC, composed of UQCC1, UQCC2; UQCC3 and UQCC4; mediates MT-CYB hemylation and association with the first nuclear-encoded complex III subunit UQCRQ. Interacts with MT-CYB.

Its subcellular location is the mitochondrion inner membrane. Required for the assembly and stability of the mitochondrial ubiquinol-cytochrome c reductase complex (complex III (CIII) or cytochrome b-c1 complex), a multisubunit transmembrane complex that is part of the mitochondrial electron transport chain (ETC) which drives oxidative phosphorylation. Mediates early complex III biogenesis. Participates in regulating the levels of electron transport chain proteins, and therefore energy supply, in response to changes in energy demand. Also required for cytochrome c oxidase complex (complex IV) assembly. The chain is Ubiquinol-cytochrome c reductase complex assembly factor 6 from Pongo abelii (Sumatran orangutan).